The sequence spans 93 residues: DNA/RNA-binding protein Alba (93 aa).

An N6-acetyllysine modification is found at Lys-11.

Belongs to the histone-like Alba family. Acetylated. Acetylation at Lys-11 decreases DNA-binding affinity.

It localises to the cytoplasm. It is found in the chromosome. Functionally, binds double-stranded DNA tightly but without sequence specificity. Involved in DNA compaction. The protein is DNA/RNA-binding protein Alba of Pyrococcus abyssi (strain GE5 / Orsay).